The sequence spans 345 residues: 4-hydroxythreonine-4-phosphate dehydrogenase (345 aa).

His148 and Thr149 together coordinate substrate. Residues His182, His227, and His282 each coordinate a divalent metal cation. Substrate-binding residues include Lys290, Asn299, and Arg308.

This sequence belongs to the PdxA family. In terms of assembly, homodimer. The cofactor is Zn(2+). Mg(2+) is required as a cofactor. Co(2+) serves as cofactor.

Its subcellular location is the cytoplasm. It catalyses the reaction 4-(phosphooxy)-L-threonine + NAD(+) = 3-amino-2-oxopropyl phosphate + CO2 + NADH. Its pathway is cofactor biosynthesis; pyridoxine 5'-phosphate biosynthesis; pyridoxine 5'-phosphate from D-erythrose 4-phosphate: step 4/5. In terms of biological role, catalyzes the NAD(P)-dependent oxidation of 4-(phosphooxy)-L-threonine (HTP) into 2-amino-3-oxo-4-(phosphooxy)butyric acid which spontaneously decarboxylates to form 3-amino-2-oxopropyl phosphate (AHAP). This chain is 4-hydroxythreonine-4-phosphate dehydrogenase, found in Bradyrhizobium diazoefficiens (strain JCM 10833 / BCRC 13528 / IAM 13628 / NBRC 14792 / USDA 110).